The following is a 416-amino-acid chain: 4-hydroxy-3-methylbut-2-en-1-yl diphosphate synthase (flavodoxin) (416 aa).

Positions 304, 307, 350, and 357 each coordinate [4Fe-4S] cluster.

Belongs to the IspG family. It depends on [4Fe-4S] cluster as a cofactor.

It carries out the reaction (2E)-4-hydroxy-3-methylbut-2-enyl diphosphate + oxidized [flavodoxin] + H2O + 2 H(+) = 2-C-methyl-D-erythritol 2,4-cyclic diphosphate + reduced [flavodoxin]. Its pathway is isoprenoid biosynthesis; isopentenyl diphosphate biosynthesis via DXP pathway; isopentenyl diphosphate from 1-deoxy-D-xylulose 5-phosphate: step 5/6. Converts 2C-methyl-D-erythritol 2,4-cyclodiphosphate (ME-2,4cPP) into 1-hydroxy-2-methyl-2-(E)-butenyl 4-diphosphate. This is 4-hydroxy-3-methylbut-2-en-1-yl diphosphate synthase (flavodoxin) from Rhizobium johnstonii (strain DSM 114642 / LMG 32736 / 3841) (Rhizobium leguminosarum bv. viciae).